A 195-amino-acid chain; its full sequence is MKNNEKVSDSFLTSSGKELSEATPSASSYTTVVRDKNIKGVVSNWLAEMKLRHKPLGFDYQGVEILEVKPEDLTSVAIALYAYGFNYLRNQCAYDVSPGGNLASVYHLTKLDADVDQPQEVCLKVFLPRENPRVPSVFWIWKTADFQERESYDMFGIYYEGHPHLKRILMPENWVGWPLRKDYITPDFFELQDAY.

The protein belongs to the complex I 30 kDa subunit family. As to quaternary structure, NDH is composed of at least 16 different subunits, 5 of which are encoded in the nucleus.

It localises to the plastid. The protein localises to the chloroplast thylakoid membrane. The enzyme catalyses a plastoquinone + NADH + (n+1) H(+)(in) = a plastoquinol + NAD(+) + n H(+)(out). It catalyses the reaction a plastoquinone + NADPH + (n+1) H(+)(in) = a plastoquinol + NADP(+) + n H(+)(out). Functionally, NDH shuttles electrons from NAD(P)H:plastoquinone, via FMN and iron-sulfur (Fe-S) centers, to quinones in the photosynthetic chain and possibly in a chloroplast respiratory chain. The immediate electron acceptor for the enzyme in this species is believed to be plastoquinone. Couples the redox reaction to proton translocation, and thus conserves the redox energy in a proton gradient. This chain is NAD(P)H-quinone oxidoreductase subunit J, chloroplastic, found in Chlorokybus atmophyticus (Soil alga).